The primary structure comprises 1020 residues: Vacuolar membrane protease (1020 aa).

Over Met-1 to Val-11 the chain is Cytoplasmic. The helical transmembrane segment at Gly-12–Ile-32 threads the bilayer. The Vacuolar portion of the chain corresponds to His-33–Leu-410. N-linked (GlcNAc...) asparagine glycans are attached at residues Asn-50, Asn-94, and Asn-130. Zn(2+) is bound by residues His-191 and Asp-203. The active-site Proton acceptor is Glu-237. 3 residues coordinate Zn(2+): Glu-238, Glu-263, and His-336. The helical transmembrane segment at Phe-411 to Ile-431 threads the bilayer. Topologically, residues Leu-432–Phe-467 are cytoplasmic. Residues Pro-468–Ile-488 form a helical membrane-spanning segment. Over Asn-489–Met-491 the chain is Vacuolar. Residues Ile-492–Leu-512 traverse the membrane as a helical segment. Residues Trp-513–Arg-529 lie on the Cytoplasmic side of the membrane. A helical transmembrane segment spans residues Gly-530–Thr-550. Residues Glu-551–Pro-561 are Vacuolar-facing. Residues Val-562–Gly-582 form a helical membrane-spanning segment. The Cytoplasmic segment spans residues Leu-583–Gln-690. Residues Asp-609–Val-648 are disordered. Residues Pro-618–Glu-631 show a composition bias toward acidic residues. Residues Phe-691–Ala-711 form a helical membrane-spanning segment. The Vacuolar portion of the chain corresponds to Ala-712 to Leu-724. A helical membrane pass occupies residues Thr-725–Ile-745. Topologically, residues His-746 to Tyr-750 are cytoplasmic. Residues Tyr-751–Phe-771 form a helical membrane-spanning segment. Residues Pro-772 to Phe-1020 lie on the Vacuolar side of the membrane. Asn-851, Asn-868, and Asn-873 each carry an N-linked (GlcNAc...) asparagine glycan.

The protein belongs to the peptidase M28 family. Zn(2+) is required as a cofactor.

The protein resides in the vacuole membrane. Its function is as follows. May be involved in vacuolar sorting and osmoregulation. The chain is Vacuolar membrane protease from Verticillium alfalfae (strain VaMs.102 / ATCC MYA-4576 / FGSC 10136) (Verticillium wilt of alfalfa).